We begin with the raw amino-acid sequence, 515 residues long: 2-isopropylmalate synthase (515 aa).

The region spanning Val5–His267 is the Pyruvate carboxyltransferase domain. The Mn(2+) site is built by Asp14, His202, His204, and Asn238. Positions Val392–His515 are regulatory domain.

This sequence belongs to the alpha-IPM synthase/homocitrate synthase family. LeuA type 1 subfamily. As to quaternary structure, homodimer. Mn(2+) is required as a cofactor.

Its subcellular location is the cytoplasm. The enzyme catalyses 3-methyl-2-oxobutanoate + acetyl-CoA + H2O = (2S)-2-isopropylmalate + CoA + H(+). It functions in the pathway amino-acid biosynthesis; L-leucine biosynthesis; L-leucine from 3-methyl-2-oxobutanoate: step 1/4. Catalyzes the condensation of the acetyl group of acetyl-CoA with 3-methyl-2-oxobutanoate (2-ketoisovalerate) to form 3-carboxy-3-hydroxy-4-methylpentanoate (2-isopropylmalate). This chain is 2-isopropylmalate synthase, found in Haemophilus influenzae (strain PittEE).